Here is a 457-residue protein sequence, read N- to C-terminus: Argininosuccinate lyase (457 aa).

This sequence belongs to the lyase 1 family. Argininosuccinate lyase subfamily.

The protein localises to the cytoplasm. It catalyses the reaction 2-(N(omega)-L-arginino)succinate = fumarate + L-arginine. It functions in the pathway amino-acid biosynthesis; L-arginine biosynthesis; L-arginine from L-ornithine and carbamoyl phosphate: step 3/3. This is Argininosuccinate lyase from Salmonella arizonae (strain ATCC BAA-731 / CDC346-86 / RSK2980).